A 417-amino-acid chain; its full sequence is Probable phosphoglycerate kinase (417 aa).

(2R)-3-phosphoglycerate contacts are provided by Val-23, Asp-24, Phe-25, Asn-26, Gln-38, Arg-39, Ser-62, His-63, Gly-65, Arg-66, Leu-121, Arg-122, His-169, and Arg-170. Residue Gly-213 participates in ADP binding. Position 213 (Gly-213) interacts with CDP. AMP is bound by residues Ala-214 and Lys-215. Residue Ala-214 coordinates ATP. Ala-214 contributes to the Mg(2+) binding site. Residues Ala-217 and Asp-218 each coordinate Mg(2+). Residue Asp-218 coordinates CDP. Lys-219 contributes to the AMP binding site. Lys-219 lines the ATP pocket. Gly-237 is an ADP binding site. Gly-237 lines the CDP pocket. 2 residues coordinate AMP: Gly-238 and Gly-312. ATP contacts are provided by Gly-238 and Gly-312. The CDP site is built by Gly-337, Ala-339, and Phe-342. Phe-342 provides a ligand contact to ADP. An AMP-binding site is contributed by Glu-343. Glu-343, Asp-374, and Thr-375 together coordinate ATP. Position 374 (Asp-374) interacts with Mg(2+).

This sequence belongs to the phosphoglycerate kinase family. As to quaternary structure, monomer. Requires Mg(2+) as cofactor.

It localises to the cytoplasm. It catalyses the reaction (2R)-3-phosphoglycerate + ATP = (2R)-3-phospho-glyceroyl phosphate + ADP. It participates in carbohydrate degradation; glycolysis; pyruvate from D-glyceraldehyde 3-phosphate: step 2/5. This Caenorhabditis elegans protein is Probable phosphoglycerate kinase (pgk-1).